The primary structure comprises 389 residues: Major outer membrane porin (389 aa).

This sequence belongs to the chlamydial porin (CP) (TC 1.B.2) family. Part of a disulfide cross-linked outer membrane complex (COMC) composed of the major outer membrane porin (MOMP), the small cysteine-rich protein (OmcA) and the large cysteine-rich periplasmic protein (OmcB).

It localises to the cell outer membrane. Its function is as follows. In elementary bodies (EBs, the infectious stage, which is able to survive outside the host cell) provides the structural integrity of the outer envelope through disulfide cross-links with the small cysteine-rich protein and the large cysteine-rich periplasmic protein. It has been described in publications as the Sarkosyl-insoluble COMC (Chlamydia outer membrane complex), and serves as the functional equivalent of peptidoglycan. Functionally, permits diffusion of specific solutes through the outer membrane. In Chlamydia pneumoniae (Chlamydophila pneumoniae), this protein is Major outer membrane porin (ompA).